The chain runs to 533 residues: Bifunctional purine biosynthesis protein PurH (533 aa).

Positions 1-148 constitute an MGS-like domain; that stretch reads MQPNRPIRQA…KNHQDVAIVV (148 aa).

The protein belongs to the PurH family.

The catalysed reaction is (6R)-10-formyltetrahydrofolate + 5-amino-1-(5-phospho-beta-D-ribosyl)imidazole-4-carboxamide = 5-formamido-1-(5-phospho-D-ribosyl)imidazole-4-carboxamide + (6S)-5,6,7,8-tetrahydrofolate. The enzyme catalyses IMP + H2O = 5-formamido-1-(5-phospho-D-ribosyl)imidazole-4-carboxamide. It participates in purine metabolism; IMP biosynthesis via de novo pathway; 5-formamido-1-(5-phospho-D-ribosyl)imidazole-4-carboxamide from 5-amino-1-(5-phospho-D-ribosyl)imidazole-4-carboxamide (10-formyl THF route): step 1/1. Its pathway is purine metabolism; IMP biosynthesis via de novo pathway; IMP from 5-formamido-1-(5-phospho-D-ribosyl)imidazole-4-carboxamide: step 1/1. This chain is Bifunctional purine biosynthesis protein PurH, found in Pasteurella multocida (strain Pm70).